The primary structure comprises 36 residues: Pancreatic polypeptide (36 aa).

Y36 carries the tyrosine amide modification.

Belongs to the NPY family.

Its subcellular location is the secreted. Its function is as follows. Hormone secreted by pancreatic cells that acts as a regulator of pancreatic and gastrointestinal functions probably by signaling through the G protein-coupled receptor NPY4R2. In Ceratotherium simum (White rhinoceros), this protein is Pancreatic polypeptide (PPY).